We begin with the raw amino-acid sequence, 306 residues long: Ornithine carbamoyltransferase (306 aa).

Carbamoyl phosphate contacts are provided by residues 53-56, Q80, R104, and 131-134; these read STRT and HPCQ. L-ornithine contacts are provided by residues N162, D219, and 223–224; that span reads SM. Carbamoyl phosphate contacts are provided by residues 259 to 260 and R287; that span reads CL.

Belongs to the aspartate/ornithine carbamoyltransferase superfamily. OTCase family.

The protein resides in the cytoplasm. The catalysed reaction is carbamoyl phosphate + L-ornithine = L-citrulline + phosphate + H(+). Its pathway is amino-acid biosynthesis; L-arginine biosynthesis; L-arginine from L-ornithine and carbamoyl phosphate: step 1/3. Its function is as follows. Reversibly catalyzes the transfer of the carbamoyl group from carbamoyl phosphate (CP) to the N(epsilon) atom of ornithine (ORN) to produce L-citrulline. This chain is Ornithine carbamoyltransferase, found in Pseudomonas syringae pv. tomato (strain ATCC BAA-871 / DC3000).